Here is a 500-residue protein sequence, read N- to C-terminus: Farnesylcysteine lyase (500 aa).

The signal sequence occupies residues 1 to 24 (MKDFPIAISLLFALLSPVLLPCSG). N-linked (GlcNAc...) asparagine glycans are attached at residues Asn-56, Asn-113, Asn-211, and Asn-281.

The protein belongs to the prenylcysteine oxidase family. Requires FAD as cofactor. As to expression, expressed in seedilings, flowers, stems, leaves and roots.

It is found in the lysosome. The catalysed reaction is S-(2E,6E)-farnesyl-L-cysteine + O2 + H2O = (2E,6E)-farnesal + L-cysteine + H2O2. Functionally, involved in the degradation of prenylcysteine. Cleaves specifically the thioether bond of S-farnesyl-L-cysteine and has no activity with S-geranylgeranyl-L-cysteine. Also recognizes N-acetyl-farnesylcysteine and may have a role in deprenylation of farnesylated proteins. This is Farnesylcysteine lyase from Arabidopsis thaliana (Mouse-ear cress).